The chain runs to 496 residues: MEKSQGYLELDKSWRHDFLYPLIFQEYIYALAHEQGLNRSILLENTDHDNKYSSLIVKRLITRMQQQNHFLIFDNDSNQNPFWKHNNNLYSQMISEGFVIIVEIPFSPRFVDSLEEKKKILKFNNLRSIHSIFPFLEDQILHLNFVSNILIPYPIHLEIVVQSLRYRVKDASSLHLLRFFLFTLNKSISSFSKRNPRLFLFLYNSHVYEYESTFLFLRNKTSHLRSTSSGAFLERIFFYGKIKHLIEVFANDFQAILWLFKDPFMHYVRYQGKSILASKRTSLRMNKWKYYLINFWQCQFYVWSQPGRVSINQLSNHSLDFLGYLSSVRLNPLAVRSQMLENSFLTDNAIKKFDIIVLLIPLIGSLAKAKFCNVLGHPLSKPARADSSDSDIIERFVRICRNLSHYHSGSSKKKSLYRIKYILRLSCARTLARKHKTAVRSFLKRLGSELLEEFLTEDGQVISLIFPRTSSTSWRLYRGGIWYLDITCINDLANHE.

Belongs to the intron maturase 2 family. MatK subfamily.

The protein resides in the plastid. The protein localises to the chloroplast. Its function is as follows. Usually encoded in the trnK tRNA gene intron. Probably assists in splicing its own and other chloroplast group II introns. This chain is Maturase K, found in Paeonia suffruticosa (Tree peony).